Here is a 404-residue protein sequence, read N- to C-terminus: Probable cysteine protease atg4 (404 aa).

Cys133 acts as the Nucleophile in catalysis. Residues Asp307 and His309 contribute to the active site.

The protein belongs to the peptidase C54 family.

The protein resides in the cytoplasm. Its subcellular location is the nucleus. The protein localises to the preautophagosomal structure. It carries out the reaction [protein]-C-terminal L-amino acid-glycyl-phosphatidylethanolamide + H2O = [protein]-C-terminal L-amino acid-glycine + a 1,2-diacyl-sn-glycero-3-phosphoethanolamine. Cysteine protease that plays a key role in cytoplasm to vacuole transport (Cvt) and autophagy by mediating both proteolytic activation and delipidation of ATG8. Required for selective autophagic degradation of the nucleus (nucleophagy) as well as for mitophagy which contributes to regulate mitochondrial quantity and quality by eliminating the mitochondria to a basal level to fulfill cellular energy requirements and preventing excess ROS production. The protease activity is required for proteolytic activation of ATG8: cleaves the C-terminal amino acid of ATG8 to reveal a C-terminal glycine. ATG8 ubiquitin-like activity requires the exposure of the glycine at the C-terminus for its conjugation to phosphatidylethanolamine (PE) and its insertion to membranes, which is necessary for autophagy. The ATG8-PE conjugate mediates tethering between adjacent membranes and stimulates membrane hemifusion, leading to expansion of the autophagosomal membrane during autophagy. In addition to the protease activity, also catalyzes deconjugation of PE-conjugated forms of ATG8 during macroautophagy: ATG8 delipidation is required to release the protein from membranes, which facilitates multiple events during macroautophagy, and especially for efficient autophagosome biogenesis, the assembly of ATG9-containing tubulovesicular clusters into phagophores/autophagosomes, and for the disassembly of PAS-associated ATG components. ATG8 delipidation by ATG4 also recycles ATG8-PE generated on inappropriate membranes to maintain a reservoir of unlipidated ATG8 that is required for autophagosome formation at the PAS. This Aspergillus niger (strain ATCC MYA-4892 / CBS 513.88 / FGSC A1513) protein is Probable cysteine protease atg4 (atg4).